The following is a 279-amino-acid chain: Large ribosomal subunit protein uL2 (279 aa).

Positions 223 to 279 (MAMNPVDHPMGGGEGKSKSGGGRKHPKSPWGQLAKGLKTRNKKKASTKLIVRGRKAK) are disordered. The span at 232 to 242 (MGGGEGKSKSG) shows a compositional bias: gly residues. The span at 259–279 (LKTRNKKKASTKLIVRGRKAK) shows a compositional bias: basic residues.

Belongs to the universal ribosomal protein uL2 family. Part of the 50S ribosomal subunit. Forms a bridge to the 30S subunit in the 70S ribosome.

In terms of biological role, one of the primary rRNA binding proteins. Required for association of the 30S and 50S subunits to form the 70S ribosome, for tRNA binding and peptide bond formation. It has been suggested to have peptidyltransferase activity; this is somewhat controversial. Makes several contacts with the 16S rRNA in the 70S ribosome. The chain is Large ribosomal subunit protein uL2 from Chlorobaculum tepidum (strain ATCC 49652 / DSM 12025 / NBRC 103806 / TLS) (Chlorobium tepidum).